The primary structure comprises 143 residues: Heat shock protein Hsp-16.41 (143 aa).

Residues 35-140 (HNSFNFSDNI…SSRSIPINFV (106 aa)) enclose the sHSP domain.

Belongs to the small heat shock protein (HSP20) family.

In Caenorhabditis elegans, this protein is Heat shock protein Hsp-16.41 (hsp-16.41).